A 346-amino-acid polypeptide reads, in one-letter code: Glycosyltransferase 1 domain-containing protein 1 (346 aa).

The N-terminal stretch at 1 to 16 (MRLLFLAVLRPHTGNA) is a signal peptide.

The protein belongs to the glycosyltransferase group 1 family. Glycosyltransferase 4 subfamily.

Its subcellular location is the secreted. The chain is Glycosyltransferase 1 domain-containing protein 1 (GLT1D1) from Homo sapiens (Human).